We begin with the raw amino-acid sequence, 345 residues long: Dimethyladenosine transferase 1, mitochondrial (345 aa).

The transit peptide at 1-27 directs the protein to the mitochondrion; that stretch reads MAASGKLGTFRLPPLPTIREIIKLFGL. The S-adenosyl-L-methionine site is built by L38, G63, E85, K86, D111, V112, and N141.

Belongs to the class I-like SAM-binding methyltransferase superfamily. rRNA adenine N(6)-methyltransferase family. KsgA subfamily. As to quaternary structure, interacts with mitochondrial RNA polymerase POLRMT. Interacts with TFAM. Remains bound to the maturing mtSSU until the late stages of assembly. Ubiquitously expressed.

Its subcellular location is the mitochondrion. It carries out the reaction adenosine(N)/adenosine(N+1) in rRNA + 4 S-adenosyl-L-methionine = N(6)-dimethyladenosine(N)/N(6)-dimethyladenosine(N+1) in rRNA + 4 S-adenosyl-L-homocysteine + 4 H(+). In terms of biological role, mitochondrial methyltransferase which uses S-adenosyl methionine to dimethylate two highly conserved adjacent adenosine residues (A1006 and A1007) within the loop of helix 45 at the 3-prime end of 12S rRNA, thereby regulating the assembly or stability of the small subunit of the mitochondrial ribosome. Also required for basal transcription of mitochondrial DNA, probably via its interaction with POLRMT and TFAM. Stimulates transcription independently of the methyltransferase activity. The protein is Dimethyladenosine transferase 1, mitochondrial (Tfb1m) of Mus musculus (Mouse).